The primary structure comprises 672 residues: Acetyl-coenzyme A synthetase (672 aa).

CoA contacts are provided by residues 205–208 (RGGK) and threonine 325. Residues 401–403 (GEP), 425–430 (DTYWQT), aspartate 516, and arginine 531 each bind ATP. Serine 539 contacts CoA. Arginine 542 lines the ATP pocket. Arginine 600 serves as a coordination point for CoA.

Belongs to the ATP-dependent AMP-binding enzyme family.

The catalysed reaction is acetate + ATP + CoA = acetyl-CoA + AMP + diphosphate. This is Acetyl-coenzyme A synthetase (facA) from Phycomyces blakesleeanus (strain ATCC 8743b / DSM 1359 / FGSC 10004 / NBRC 33097 / NRRL 1555).